A 144-amino-acid chain; its full sequence is Putative pre-16S rRNA nuclease (144 aa).

This sequence belongs to the YqgF nuclease family.

The protein resides in the cytoplasm. Could be a nuclease involved in processing of the 5'-end of pre-16S rRNA. The protein is Putative pre-16S rRNA nuclease of Oleidesulfovibrio alaskensis (strain ATCC BAA-1058 / DSM 17464 / G20) (Desulfovibrio alaskensis).